Consider the following 356-residue polypeptide: MTKENICIVFGGKSAEHEVSILTAQNVLNAIDKDKYHVDIIYITNDGDWRKQNNITTEIKSTDELHLENGEALEISQLLKESSSGQPYDAVFPLLHGPNGEDGTIQGLFEVLDVPYVGNGVLSAASSMDKLVMKQLFEHRGLPQLPYISFLRSEYEKYEHNILKLVNDKLNYPVFVKPANLGSSIGISKCSNEVELKEGIKEAFQFDRKLVIEQGVNAREIEVAVLGNDYPEATWPGEVVKDVAFYDYKSKYKDGKVQLQIPADLDEDVQLTLRNMALEAFKATDCSGLVRADFFVTEDNQIYINETNAMPGFTAFSMYPKLWENMGLSYPELITKLIELAKERHQDKQKNKYKID.

The ATP-grasp domain maps to 134-339; it reads KQLFEHRGLP…YPELITKLIE (206 aa). 167-222 serves as a coordination point for ATP; it reads NDKLNYPVFVKPANLGSSIGISKCSNEVELKEGIKEAFQFDRKLVIEQGVNAREIE. Positions 293, 306, and 308 each coordinate Mg(2+).

It belongs to the D-alanine--D-alanine ligase family. Requires Mg(2+) as cofactor. It depends on Mn(2+) as a cofactor.

It localises to the cytoplasm. It catalyses the reaction 2 D-alanine + ATP = D-alanyl-D-alanine + ADP + phosphate + H(+). Its pathway is cell wall biogenesis; peptidoglycan biosynthesis. Functionally, cell wall formation. The chain is D-alanine--D-alanine ligase from Staphylococcus aureus (strain MRSA252).